A 584-amino-acid polypeptide reads, in one-letter code: ATP-dependent lipid A-core flippase (584 aa).

5 helical membrane passes run Leu-18–Leu-38, Val-65–Phe-85, Ile-155–Leu-175, Ile-252–Ala-272, and Val-277–Met-297. The region spanning Val-30 to Arg-312 is the ABC transmembrane type-1 domain. The ABC transporter domain maps to Ile-344–Leu-580. Gly-378–Ser-385 lines the ATP pocket.

This sequence belongs to the ABC transporter superfamily. Lipid exporter (TC 3.A.1.106) family. As to quaternary structure, homodimer.

It is found in the cell inner membrane. It carries out the reaction ATP + H2O + lipid A-core oligosaccharideSide 1 = ADP + phosphate + lipid A-core oligosaccharideSide 2.. Its function is as follows. Involved in lipopolysaccharide (LPS) biosynthesis. Translocates lipid A-core from the inner to the outer leaflet of the inner membrane. Transmembrane domains (TMD) form a pore in the inner membrane and the ATP-binding domain (NBD) is responsible for energy generation. This chain is ATP-dependent lipid A-core flippase, found in Blochmanniella pennsylvanica (strain BPEN).